Consider the following 467-residue polypeptide: Zinc finger protein 410 (467 aa).

Disordered regions lie at residues 84–111 and 187–214; these read PDGEETRAQTVQKSPEFLSTPESPSLLQ and NAKTSSNGENVHLGSGDGQPKDSGPLPQ. C2H2-type zinc fingers lie at residues 219–243, 249–273, 279–303, 309–333, and 339–362; these read LKCTVEGCDRTFVWPAHFKYHLKTH, FICPAAGCGKSFYVLQRLKVHMRTH, FVCPESNCGKQFTTAGNLKNHLRIH, FLCEAQGCGRSFAEYSSLRKHLVVH, and HQCQVCGKTFSQSGSRNVHMRKHH. Zn(2+) is bound by residues Cys221, Cys226, His239, His243, Cys251, Cys256, His269, His273, Cys281, Cys286, His299, His303, Cys311, Cys316, His329, His333, Cys341, Cys344, His357, and His361.

Interacts with CDKN2A/p14ARF. In terms of processing, O-glycosylated. O-GlcNAcylation may occur in response to increasing glucose levels and affect transcription factor activity. Post-translationally, sumoylated. Sumoylation increases its half-life, possibly by blocking ubiquitin-mediated degradation.

The protein resides in the nucleus. It localises to the chromosome. Functionally, transcription factor that binds to the sequence motif 5'-CATCCCATAATA-3', and is specifically required to silence expression of fetal hemoglobin in adult erythroid cells. Prevents expression of fetal hemoglobin genes HBG1 and HBG2 through CHD4: acts as a direct transcriptional activator of CHD4, a central component of the NuRD complex that represses transcription of fetal hemoglobin genes HBG1 and HBG2 in erythroid cells. May also activate transcription of matrix-remodeling genes such as MMP1 during fibroblast senescence. May activate transcription of the gap junction gene GJC1, perhaps in response to increasing glucose. However, recent studies suggest that ZNF410 is dedicated to regulate expression of a single gene: CHD4. This is Zinc finger protein 410 from Bos taurus (Bovine).